The sequence spans 280 residues: DegV domain-containing protein SPy_1698/M5005_Spy1391 (280 aa).

A DegV domain is found at W3–I280. Residues S63 and S91 each coordinate hexadecanoate.

In terms of biological role, may bind long-chain fatty acids, such as palmitate, and may play a role in lipid transport or fatty acid metabolism. In Streptococcus pyogenes serotype M1, this protein is DegV domain-containing protein SPy_1698/M5005_Spy1391.